We begin with the raw amino-acid sequence, 630 residues long: MESGPESLQPLEHGVAAGPAPGTGSPQEGQQETRLAAGDGPGVWAAESSGGKGQGAAAGGRSLSDSASPAGSPQVLVPCSSLPRLDLKESDLESPAAQKEPVRGQHKVTASPETAEAGADHGLGPEGDGGARPDPAGTCQEESAAAGSSEPSSGGGLSSSCSDPSPPGESPSLDSLESFSNLHSFPSSSEFNSEEGAENRVPEEEEGAAVLPGAVPLCGEEEVEEEEAQVLAASKERFPGQSVYHIKWIQWKEENTPIITQNENGPCPLLAILNVLLLAWKVKLPPMMEIITAEQLMEYLGDYMLDTKPKEISEIQRLNYEQNMSDAMAVLHKLQTGLDVNVKFTGVRVFEYTPECIVFDLLDIPLYHGWLVDPQIDDIVKAVGNCSYNQLVEKIISCKQSENSELVSEGFVAEQFLNNTATQLTYHGLCELTSTVQEGELCVFFRNNHFSTMTKYKGLLYLLVTDQGFLTEEKVVWESLHNVDGDGNFCDSEFHLRPPSDPETVYRGQQDQIDQDYLMALSLQQEQQSQEINWEQIPEGISDLELAKKLQEEEDRRASQYYQEQEQAAAAAASASASASASASTQAPQSQPVQASPSSGRQSGNSERKRKEPREKDKEKEKEKNSCVIL.

The disordered stretch occupies residues 1–209; the sequence is MESGPESLQP…RVPEEEEGAA (209 aa). The span at 24-33 shows a compositional bias: polar residues; the sequence is GSPQEGQQET. The residue at position 94 (Ser-94) is a Phosphoserine. Low complexity-rich tracts occupy residues 141–163 and 170–191; these read EESA…SCSD and SPSL…SSEF. The active-site Nucleophile is the Cys-267. The active-site Proton acceptor is His-449. A ubiquitin-binding domain (UBD) region spans residues 508–560; the sequence is GQQDQIDQDYLMALSLQQEQQSQEINWEQIPEGISDLELAKKLQEEEDRRASQ. A compositionally biased stretch (low complexity) spans 564-599; it reads EQEQAAAAAASASASASASASTQAPQSQPVQASPSS. A disordered region spans residues 564-630; that stretch reads EQEQAAAAAA…EKEKNSCVIL (67 aa). A compositionally biased stretch (basic and acidic residues) spans 606-630; sequence SERKRKEPREKDKEKEKEKNSCVIL.

The protein belongs to the MINDY deubiquitinase family. FAM63 subfamily.

The catalysed reaction is Thiol-dependent hydrolysis of ester, thioester, amide, peptide and isopeptide bonds formed by the C-terminal Gly of ubiquitin (a 76-residue protein attached to proteins as an intracellular targeting signal).. Functionally, hydrolase that can remove 'Lys-48'-linked conjugated ubiquitin from proteins. Can also bind to polyubiquitin chains of different linkage types, including 'Lys-6', 'Lys-11', 'Lys-29', 'Lys-33' and 'Lys-63'. May play a regulatory role at the level of protein turnover. The protein is Ubiquitin carboxyl-terminal hydrolase MINDY-2 (MINDY2) of Bos taurus (Bovine).